The chain runs to 320 residues: MDFPGNSRFASFVRADFEYSRVEDHPLIASVLSPRKAEESAQRQSPVLVFWHGGGFVVGGRLYEPWWSEWLIEYALSQDAIIVAPDYRLLPEATGADIFDDVEAFWIWLHKSLPSLAQSNSWHAKPDLTRILCVGQSGGGSMAVHSALLHPEFNIKAIVSLYAPLYHNVPNLTVPRPRRILGTMPPPPRKAEGLIRSYIKQSKGSVRTGGDPLDMWELLLCLLQQGRLISLMNLKPDSRLDTPSLLRQVGKLPPLWLIHGEDDSVIPFKCSEMFLDELRVIAPSTSVLVSARTGEHNFDTSLTMKEDWIRNGCDFLSTHW.

An Involved in the stabilization of the negatively charged intermediate by the formation of the oxyanion hole motif is present at residues 52–54 (HGG). Catalysis depends on residues Ser-137 and His-296.

This sequence belongs to the 'GDXG' lipolytic enzyme family.

The enzyme catalyses a carboxylic ester + H2O = an alcohol + a carboxylate + H(+). It participates in secondary metabolite biosynthesis. Probable carboxylesterase; part of the gene cluster that mediates the biosynthesis of squalestatin S1 (SQS1, also known as zaragozic acid A), a heavily oxidized fungal polyketide that offers potent cholesterol lowering activity by targeting squalene synthase (SS). SQS1 is composed of a 2,8-dioxobicyclic[3.2.1]octane-3,4,5-tricarboxyclic acid core that is connected to two lipophilic polyketide arms. These initial steps feature the priming of an unusual benzoic acid starter unit onto the highly reducing polyketide synthase pks2, followed by oxaloacetate extension and product release to generate a tricarboxylic acid containing product. The phenylalanine ammonia lyase (PAL) M7 and the acyl-CoA ligase M9 are involved in transforming phenylalanine into benzoyl-CoA. The citrate synthase-like protein R3 is involved in connecting the C-alpha-carbons of the hexaketide chain and oxaloacetate to afford the tricarboxylic acid unit. The potential hydrolytic enzymes, M8 and M10, are in close proximity to pks2 and may participate in product release. On the other side, the tetraketide arm is synthesized by a the squalestatin tetraketide synthase pks1 and enzymatically esterified to the core in the last biosynthetic step, by the acetyltransferase M4. The biosynthesis of the tetraketide must involve 3 rounds of chain extension. After the first and second rounds methyl-transfer occurs, and in all rounds of extension the ketoreductase and dehydratase are active. The enoyl reductase and C-MeT of pks1 are not active in the final round of extension. The acetyltransferase M4 appears to have a broad substrate selectivity for its acyl CoA substrate, allowing the in vitro synthesis of novel squalestatins. The biosynthesis of SQS1 requires several oxidative steps likely performed by oxidoreductases M1, R1 and R2. Finally, in support of the identification of the cluster as being responsible for SQS1 production, the cluster contains a gene encoding a putative squalene synthase (SS) R6, suggesting a likely mechanism for self-resistance. The chain is Probable carboxylesterase M8 from Phoma sp. (strain ATCC 20986 / MF5453).